Consider the following 77-residue polypeptide: Conotoxin CaHr91 (77 aa).

A signal peptide spans 1–19 (MKLTCALIITVLFLSITAD). The propeptide occupies 20-43 (DSRGKQGYRALKSIAGMLNSKTVR). Cystine bridges form between Cys45–Cys60, Cys52–Cys65, and Cys59–Cys74.

This sequence belongs to the conotoxin O1 superfamily. Expressed by the venom duct.

The protein localises to the secreted. This Conus capitaneus (Captain cone) protein is Conotoxin CaHr91.